The chain runs to 173 residues: Cytochrome c-type biogenesis protein CcmE (173 aa).

Over 1 to 8 (MNPRRKSR) the chain is Cytoplasmic. A helical; Signal-anchor for type II membrane protein transmembrane segment spans residues 9-29 (FKLVIFVVLGIAIASGLMLYA). Over 30–173 (LRQNIDLFYT…RDRQEKEGAK (144 aa)) the chain is Periplasmic. Heme-binding residues include histidine 131 and tyrosine 135. The interval 139 to 173 (ELGEKMQKVHKPMGIKAADLKGESERDRQEKEGAK) is disordered. The span at 156-173 (ADLKGESERDRQEKEGAK) shows a compositional bias: basic and acidic residues.

Belongs to the CcmE/CycJ family.

It is found in the cell inner membrane. Functionally, heme chaperone required for the biogenesis of c-type cytochromes. Transiently binds heme delivered by CcmC and transfers the heme to apo-cytochromes in a process facilitated by CcmF and CcmH. The chain is Cytochrome c-type biogenesis protein CcmE from Haemophilus influenzae (strain 86-028NP).